Consider the following 240-residue polypeptide: Gene 88 protein (240 aa).

The chain is Gene 88 protein (88) from Mycobacterium phage D29 (Mycobacteriophage D29).